Here is a 94-residue protein sequence, read N- to C-terminus: Protein RnfH (94 aa).

This sequence belongs to the UPF0125 (RnfH) family.

In Yersinia pestis bv. Antiqua (strain Antiqua), this protein is Protein RnfH.